Consider the following 116-residue polypeptide: Nucleoid-associated protein PMT9312_0020 (116 aa).

Belongs to the YbaB/EbfC family. Homodimer.

It localises to the cytoplasm. Its subcellular location is the nucleoid. Binds to DNA and alters its conformation. May be involved in regulation of gene expression, nucleoid organization and DNA protection. In Prochlorococcus marinus (strain MIT 9312), this protein is Nucleoid-associated protein PMT9312_0020.